We begin with the raw amino-acid sequence, 432 residues long: Adenylosuccinate synthetase (432 aa).

Residues 12-18 and 40-42 contribute to the GTP site; these read GDEGKGK and GHT. D13 acts as the Proton acceptor in catalysis. The Mg(2+) site is built by D13 and G40. IMP is bound by residues 13 to 16, 38 to 41, T130, R144, Q225, T240, and R304; these read DEGK and NAGH. The active-site Proton donor is the H41. 300–306 contacts substrate; the sequence is ATTGRPR. GTP-binding positions include R306, 332-334, and 414-416; these read KLD and SVG.

This sequence belongs to the adenylosuccinate synthetase family. As to quaternary structure, homodimer. The cofactor is Mg(2+).

The protein localises to the cytoplasm. It catalyses the reaction IMP + L-aspartate + GTP = N(6)-(1,2-dicarboxyethyl)-AMP + GDP + phosphate + 2 H(+). The protein operates within purine metabolism; AMP biosynthesis via de novo pathway; AMP from IMP: step 1/2. Functionally, plays an important role in the de novo pathway of purine nucleotide biosynthesis. Catalyzes the first committed step in the biosynthesis of AMP from IMP. The polypeptide is Adenylosuccinate synthetase (Anaeromyxobacter sp. (strain K)).